The chain runs to 545 residues: ATP synthase subunit alpha (545 aa).

Residue 173–180 (GDRQTGKT) participates in ATP binding.

It belongs to the ATPase alpha/beta chains family. In terms of assembly, F-type ATPases have 2 components, CF(1) - the catalytic core - and CF(0) - the membrane proton channel. CF(1) has five subunits: alpha(3), beta(3), gamma(1), delta(1), epsilon(1). CF(0) has three main subunits: a(1), b(2) and c(9-12). The alpha and beta chains form an alternating ring which encloses part of the gamma chain. CF(1) is attached to CF(0) by a central stalk formed by the gamma and epsilon chains, while a peripheral stalk is formed by the delta and b chains.

It localises to the cell membrane. It carries out the reaction ATP + H2O + 4 H(+)(in) = ADP + phosphate + 5 H(+)(out). Produces ATP from ADP in the presence of a proton gradient across the membrane. The alpha chain is a regulatory subunit. This chain is ATP synthase subunit alpha, found in Clavibacter michiganensis subsp. michiganensis (strain NCPPB 382).